The primary structure comprises 124 residues: Small ribosomal subunit protein uS12 (124 aa).

At D89 the chain carries 3-methylthioaspartic acid.

This sequence belongs to the universal ribosomal protein uS12 family. In terms of assembly, part of the 30S ribosomal subunit. Contacts proteins S8 and S17. May interact with IF1 in the 30S initiation complex.

Its function is as follows. With S4 and S5 plays an important role in translational accuracy. Functionally, interacts with and stabilizes bases of the 16S rRNA that are involved in tRNA selection in the A site and with the mRNA backbone. Located at the interface of the 30S and 50S subunits, it traverses the body of the 30S subunit contacting proteins on the other side and probably holding the rRNA structure together. The combined cluster of proteins S8, S12 and S17 appears to hold together the shoulder and platform of the 30S subunit. This is Small ribosomal subunit protein uS12 from Erwinia tasmaniensis (strain DSM 17950 / CFBP 7177 / CIP 109463 / NCPPB 4357 / Et1/99).